The chain runs to 266 residues: Transmembrane domain-containing protein TMIGD3 (266 aa).

The segment at 1 to 20 (MEGSPAGPIEQKEARWESSW) is disordered. Residues 55 to 75 (FLPVMWLFILLSLALISDAMV) form a helical membrane-spanning segment. N192 is a glycosylation site (N-linked (GlcNAc...) asparagine). A helical membrane pass occupies residues 213 to 233 (ILIICILITGLGIISVISHLT).

Expressed in the lung and bone. Expressed at lower levels in osteosarcoma tissues (at protein level).

It is found in the membrane. Its function is as follows. Plays a suppressive role in osteosarcoma malignancy by inhibiting NF-kappa-B activity. The chain is Transmembrane domain-containing protein TMIGD3 from Homo sapiens (Human).